A 116-amino-acid chain; its full sequence is MTDQADATMPIKFTDAAAAKVKGLLEEEQNPALKLRVYVTGGGCSGFQYGFTFDEKVNEGDFTVEKQGVQLVVDPMSLQYLVGGEVDYTSGLEGSRFFVKNPNATTTCGCGASFSV.

Residues cysteine 44, cysteine 108, and cysteine 110 each coordinate iron-sulfur cluster.

It belongs to the HesB/IscA family. Homodimer. The cofactor is iron-sulfur cluster.

Required for insertion of 4Fe-4S clusters for at least IspG. The chain is Iron-sulfur cluster insertion protein ErpA from Shewanella oneidensis (strain ATCC 700550 / JCM 31522 / CIP 106686 / LMG 19005 / NCIMB 14063 / MR-1).